The following is a 723-amino-acid chain: E3 ubiquitin-protein ligase LRSAM1 (723 aa).

6 LRR repeats span residues 30–51, 56–77, 82–103, 105–127, 128–149, and 151–172; these read ADDI…AFAT, QKKV…SCSL, TIKV…LGQL, ALQV…GNLT, QLQT…VGEL, and SLRT…LAHV. Ser-234 carries the post-translational modification Phosphoserine. 2 coiled-coil regions span residues 254–380 and 510–562; these read SDYE…TESL and ALSS…KPLS. Residues 282 to 314 form a disordered region; sequence TQLLQQSSSQKDEILQTVKEEQSRLEQGLSEHQ. Residues 291–314 show a composition bias toward basic and acidic residues; that stretch reads QKDEILQTVKEEQSRLEQGLSEHQ. The 64-residue stretch at 569–632 folds into the SAM domain; that stretch reads GMERQLVALL…LRRVQELLDA (64 aa). Ser-604 is modified (phosphoserine). Residues 642–665 are disordered; it reads PMGEVVTPTAPQEPPESVRPSAPP. 2 short sequence motifs (PTAP motif) span residues 649–652 and 661–664; these read PTAP and PSAP. The RING-type zinc finger occupies 675 to 710; sequence CVVCLEREAQMIFLNCGHVCCCQQCCQPLRTCPLCR.

Interacts with TSG101. Interacts with PHF23. Interacts with FUS. In terms of processing, ubiquitination promoted by PHF23 leads to proteasomal degradation. As to expression, highly expressed in adult spinal cord motoneurons as well as in fetal spinal cord and muscle tissue.

It localises to the cytoplasm. The enzyme catalyses S-ubiquitinyl-[E2 ubiquitin-conjugating enzyme]-L-cysteine + [acceptor protein]-L-lysine = [E2 ubiquitin-conjugating enzyme]-L-cysteine + N(6)-ubiquitinyl-[acceptor protein]-L-lysine.. It functions in the pathway protein modification; protein ubiquitination. Functionally, E3 ubiquitin-protein ligase that mediates monoubiquitination of TSG101 at multiple sites, leading to inactivate the ability of TSG101 to sort endocytic (EGF receptors) and exocytic (HIV-1 viral proteins) cargos. Bacterial recognition protein that defends the cytoplasm from invasive pathogens. Localizes to several intracellular bacterial pathogens and generates the bacteria-associated ubiquitin signal leading to autophagy-mediated intracellular bacteria degradation (xenophagy). The sequence is that of E3 ubiquitin-protein ligase LRSAM1 from Homo sapiens (Human).